Reading from the N-terminus, the 432-residue chain is Maltoporin (432 aa).

The N-terminal stretch at 1-22 is a signal peptide; the sequence is MKKVSVIAAAVAATLAAGSAFA.

It belongs to the porin LamB (TC 1.B.3) family. As to quaternary structure, homotrimer formed of three 18-stranded antiparallel beta-barrels, containing three independent channels.

It is found in the cell outer membrane. It catalyses the reaction beta-maltose(in) = beta-maltose(out). In terms of biological role, involved in the transport of maltose and maltodextrins. This is Maltoporin from Vibrio parahaemolyticus serotype O3:K6 (strain RIMD 2210633).